The following is a 740-amino-acid chain: Catalase-peroxidase (740 aa).

The segment covering 1-14 (MTENHDAIVTDAKS) has biased composition (basic and acidic residues). A disordered region spans residues 1–21 (MTENHDAIVTDAKSEGSGGCP). Positions 108-231 (WHSAGTYRIS…LGAVQMGLIY (124 aa)) form a cross-link, tryptophyl-tyrosyl-methioninium (Trp-Tyr) (with M-257). His109 acts as the Proton acceptor in catalysis. The tryptophyl-tyrosyl-methioninium (Tyr-Met) (with W-108) cross-link spans 231–257 (YVNPEGPNGNPDPIAAARDIRETFRRM). His272 is a heme b binding site.

It belongs to the peroxidase family. Peroxidase/catalase subfamily. In terms of assembly, homodimer. Heme b is required as a cofactor. Formation of the three residue Trp-Tyr-Met cross-link is important for the catalase, but not the peroxidase activity of the enzyme.

It catalyses the reaction H2O2 + AH2 = A + 2 H2O. The catalysed reaction is 2 H2O2 = O2 + 2 H2O. Its function is as follows. Bifunctional enzyme with both catalase and broad-spectrum peroxidase activity. In Streptomyces reticuli, this protein is Catalase-peroxidase.